We begin with the raw amino-acid sequence, 409 residues long: Microfibrillar-associated protein 3-like (409 aa).

An N-terminal signal peptide occupies residues 1 to 28 (MGLQKSHLTVCLPPSVPFLILVSTLATA). The Extracellular portion of the chain corresponds to 29 to 148 (KSVTNSTLNG…TLRVIFTSGD (120 aa)). Residues N33, N37, N67, N111, and N135 are each glycosylated (N-linked (GlcNAc...) asparagine). The 95-residue stretch at 47 to 141 (PVIIARTDHI…GTINNTVTLR (95 aa)) folds into the Ig-like C2-type domain. C68 and C125 are joined by a disulfide. The chain crosses the membrane as a helical span at residues 149 to 169 (MGVYYMVVCLVAFTIVMILNI). The Cytoplasmic segment spans residues 170-409 (TRLCMMSSHL…NTCIIYESHV (240 aa)). Residue Y287 is modified to Phosphotyrosine. S298, S303, S306, and S307 each carry phosphoserine. Residues 319-395 (VSVHPQSKRD…AHLETTEPAV (77 aa)) are disordered. Over residues 325 to 340 (SKRDHVDDQEGGHFEV) the composition is skewed to basic and acidic residues. The span at 356-373 (TAEPSTDITTTELTSEET) shows a compositional bias: low complexity.

The protein resides in the cell membrane. It localises to the nucleus. The protein localises to the cytoplasm. Functionally, may participate in the nuclear signaling of EGFR and MAPK1/ERK2. The chain is Microfibrillar-associated protein 3-like (Mfap3l) from Mus musculus (Mouse).